The chain runs to 348 residues: (+)-germacrene D synthase (348 aa).

Asp97, Asp101, Asn242, and Ser246 together coordinate Mg(2+). The DDXXD motif signature appears at 97 to 101 (DDILD).

This sequence belongs to the terpene synthase family. It depends on Mg(2+) as a cofactor.

The enzyme catalyses (2E,6E)-farnesyl diphosphate = (+)-germacrene D + diphosphate. It participates in secondary metabolite biosynthesis; terpenoid biosynthesis. Its function is as follows. Sesquiterpene synthase converting farnesyl diphosphate to eight sesquiterpenes, with (+)-germacrene D and an unidentified oxygenated sesquiterpene as the major products. Has no diterpene synthase activity. This is (+)-germacrene D synthase from Selaginella moellendorffii (Spikemoss).